The chain runs to 273 residues: Thiazole synthase (273 aa).

Catalysis depends on Lys-110, which acts as the Schiff-base intermediate with DXP. 1-deoxy-D-xylulose 5-phosphate-binding positions include Gly-171, 198–199 (AG), and 220–221 (NS).

This sequence belongs to the ThiG family. As to quaternary structure, homotetramer. Forms heterodimers with either ThiH or ThiS.

The protein localises to the cytoplasm. The enzyme catalyses [ThiS sulfur-carrier protein]-C-terminal-Gly-aminoethanethioate + 2-iminoacetate + 1-deoxy-D-xylulose 5-phosphate = [ThiS sulfur-carrier protein]-C-terminal Gly-Gly + 2-[(2R,5Z)-2-carboxy-4-methylthiazol-5(2H)-ylidene]ethyl phosphate + 2 H2O + H(+). It functions in the pathway cofactor biosynthesis; thiamine diphosphate biosynthesis. In terms of biological role, catalyzes the rearrangement of 1-deoxy-D-xylulose 5-phosphate (DXP) to produce the thiazole phosphate moiety of thiamine. Sulfur is provided by the thiocarboxylate moiety of the carrier protein ThiS. In vitro, sulfur can be provided by H(2)S. In Hydrogenovibrio crunogenus (strain DSM 25203 / XCL-2) (Thiomicrospira crunogena), this protein is Thiazole synthase.